Reading from the N-terminus, the 549-residue chain is Dihydroxy-acid dehydratase (549 aa).

Asp-78 serves as a coordination point for Mg(2+). Cys-119 lines the [2Fe-2S] cluster pocket. Mg(2+) is bound by residues Asp-120 and Lys-121. Lys-121 is modified (N6-carboxylysine). Cys-191 contacts [2Fe-2S] cluster. Glu-441 serves as a coordination point for Mg(2+). Residue Ser-466 is the Proton acceptor of the active site.

Belongs to the IlvD/Edd family. As to quaternary structure, homodimer. [2Fe-2S] cluster serves as cofactor. The cofactor is Mg(2+).

It catalyses the reaction (2R)-2,3-dihydroxy-3-methylbutanoate = 3-methyl-2-oxobutanoate + H2O. It carries out the reaction (2R,3R)-2,3-dihydroxy-3-methylpentanoate = (S)-3-methyl-2-oxopentanoate + H2O. It functions in the pathway amino-acid biosynthesis; L-isoleucine biosynthesis; L-isoleucine from 2-oxobutanoate: step 3/4. It participates in amino-acid biosynthesis; L-valine biosynthesis; L-valine from pyruvate: step 3/4. Functions in the biosynthesis of branched-chain amino acids. Catalyzes the dehydration of (2R,3R)-2,3-dihydroxy-3-methylpentanoate (2,3-dihydroxy-3-methylvalerate) into 2-oxo-3-methylpentanoate (2-oxo-3-methylvalerate) and of (2R)-2,3-dihydroxy-3-methylbutanoate (2,3-dihydroxyisovalerate) into 2-oxo-3-methylbutanoate (2-oxoisovalerate), the penultimate precursor to L-isoleucine and L-valine, respectively. This chain is Dihydroxy-acid dehydratase, found in Methanosphaera stadtmanae (strain ATCC 43021 / DSM 3091 / JCM 11832 / MCB-3).